A 216-amino-acid polypeptide reads, in one-letter code: Protein E4.2 (216 aa).

In Pantherophis guttatus (Corn snake), this protein is Protein E4.2.